A 618-amino-acid chain; its full sequence is Delta-like protein 3 (618 aa).

Residues 1–26 (MVSPRMSGLLSQTVILALIFLPQTRP) form the signal peptide. The Extracellular segment spans residues 27–492 (AGVFELQIHS…LRPGDPQRYL (466 aa)). The 40-residue stretch at 176-215 (ARCEPPAVGTACTRLCRPRSAPSRCGPGLRPCAPLEDECE) folds into the DSL domain. 6 consecutive EGF-like domains span residues 216–249 (APLV…PLCT), 274–310 (GPGP…LRCE), 312–351 (SGVT…SNCE), 353–389 (RVDR…PRCE), 391–427 (DLDD…RDCR), and 429–465 (RADP…ARCE). Disulfide bonds link Cys-220/Cys-231, Cys-224/Cys-237, Cys-239/Cys-248, Cys-278/Cys-289, Cys-283/Cys-298, Cys-300/Cys-309, Cys-316/Cys-327, Cys-321/Cys-339, Cys-341/Cys-350, Cys-357/Cys-368, Cys-362/Cys-377, Cys-379/Cys-388, Cys-395/Cys-406, Cys-400/Cys-415, Cys-417/Cys-426, Cys-433/Cys-444, Cys-438/Cys-453, and Cys-455/Cys-464. A helical transmembrane segment spans residues 493-513 (LPPALGLLVAAGVAGAALLLV). The Cytoplasmic portion of the chain corresponds to 514-618 (HVRRRGHSQD…PYPSSILSVK (105 aa)). The segment covering 546-562 (NLRTQEGSGDGPSSSVD) has biased composition (polar residues). Positions 546-566 (NLRTQEGSGDGPSSSVDWNRP) are disordered.

Can bind and activate Notch-1 or another Notch receptor. Post-translationally, ubiquitinated by MIB (MIB1 or MIB2), leading to its endocytosis and subsequent degradation.

It is found in the membrane. Inhibits primary neurogenesis. May be required to divert neurons along a specific differentiation pathway. Plays a role in the formation of somite boundaries during segmentation of the paraxial mesoderm. The protein is Delta-like protein 3 (DLL3) of Homo sapiens (Human).